The following is a 470-amino-acid chain: Uronate isomerase (470 aa).

It belongs to the metallo-dependent hydrolases superfamily. Uronate isomerase family.

The enzyme catalyses D-glucuronate = D-fructuronate. It carries out the reaction aldehydo-D-galacturonate = keto-D-tagaturonate. The protein operates within carbohydrate metabolism; pentose and glucuronate interconversion. The sequence is that of Uronate isomerase from Salmonella paratyphi A (strain ATCC 9150 / SARB42).